Consider the following 790-residue polypeptide: Kinesin-like protein KIF9 (790 aa).

Residues 6–340 (KVQAFVRVRP…LRFASRMKLV (335 aa)) form the Kinesin motor domain. ATP-binding positions include 12–14 (RVR) and 93–100 (GQTGAGKT). Residues 342–442 (TEPAINEKYD…EQEVESALRR (101 aa)) are a coiled coil. A disordered region spans residues 482–521 (GVAPFSVKPGKKPKTKKTPKDQFSSSARKEGASSPVSGKD). Residue threonine 530 is modified to Phosphothreonine. The disordered stretch occupies residues 547–577 (RERETSSIEPLISDSPKEELRAPRPSTPPSR). A coiled-coil region spans residues 600-695 (KSILNERKKR…YCQRLVDQCR (96 aa)).

The protein belongs to the TRAFAC class myosin-kinesin ATPase superfamily. Kinesin family. In terms of assembly, interacts with HYDIN. As to expression, highly expressed in the testis (at protein level). Weakly expressed in the brain, thymus, lung and heart.

The protein localises to the cytoplasm. It localises to the cytoskeleton. The protein resides in the cell projection. Its subcellular location is the cilium. It is found in the flagellum. The protein localises to the flagellum axoneme. Essential for normal male fertility and for progressive motility of spermatozoa. The chain is Kinesin-like protein KIF9 (Kif9) from Mus musculus (Mouse).